Here is a 233-residue protein sequence, read N- to C-terminus: Large ribosomal subunit protein uL1 (233 aa).

The protein belongs to the universal ribosomal protein uL1 family. In terms of assembly, part of the 50S ribosomal subunit.

Its function is as follows. Binds directly to 23S rRNA. The L1 stalk is quite mobile in the ribosome, and is involved in E site tRNA release. Protein L1 is also a translational repressor protein, it controls the translation of the L11 operon by binding to its mRNA. This is Large ribosomal subunit protein uL1 from Geotalea daltonii (strain DSM 22248 / JCM 15807 / FRC-32) (Geobacter daltonii).